Here is a 249-residue protein sequence, read N- to C-terminus: Zinc import ATP-binding protein ZnuC (249 aa).

An ABC transporter domain is found at 1–219 (MRLVSLRNAT…PEYQALFGSG (219 aa)). 36–43 (GPNGSGKS) contributes to the ATP binding site.

This sequence belongs to the ABC transporter superfamily. Zinc importer (TC 3.A.1.15.5) family. The complex is composed of two ATP-binding proteins (ZnuC), two transmembrane proteins (ZnuB) and a solute-binding protein (ZnuA).

It localises to the cell inner membrane. It carries out the reaction Zn(2+)(out) + ATP(in) + H2O(in) = Zn(2+)(in) + ADP(in) + phosphate(in) + H(+)(in). Functionally, part of the ABC transporter complex ZnuABC involved in zinc import. Responsible for energy coupling to the transport system. This is Zinc import ATP-binding protein ZnuC from Ruegeria sp. (strain TM1040) (Silicibacter sp.).